A 149-amino-acid chain; its full sequence is Large ribosomal subunit protein uL15 (149 aa).

2 stretches are compositionally biased toward basic residues: residues 1–14 and 21–30; these read MPTRFSKTRKHRGH and RVGKHRKHPG. The interval 1–43 is disordered; it reads MPTRFSKTRKHRGHVSAGKGRVGKHRKHPGGRGMAGGQHHHRT.

Belongs to the universal ribosomal protein uL15 family. As to quaternary structure, component of the large ribosomal subunit (LSU). Mature N.crassa ribosomes consist of a small (40S) and a large (60S) subunit. The 40S small subunit contains 1 molecule of ribosomal RNA (18S rRNA) and at least 32 different proteins. The large 60S subunit contains 3 rRNA molecules (26S, 5.8S and 5S rRNA) and at least 42 different proteins.

It localises to the cytoplasm. Functionally, component of the ribosome, a large ribonucleoprotein complex responsible for the synthesis of proteins in the cell. The small ribosomal subunit (SSU) binds messenger RNAs (mRNAs) and translates the encoded message by selecting cognate aminoacyl-transfer RNA (tRNA) molecules. The large subunit (LSU) contains the ribosomal catalytic site termed the peptidyl transferase center (PTC), which catalyzes the formation of peptide bonds, thereby polymerizing the amino acids delivered by tRNAs into a polypeptide chain. The nascent polypeptides leave the ribosome through a tunnel in the LSU and interact with protein factors that function in enzymatic processing, targeting, and the membrane insertion of nascent chains at the exit of the ribosomal tunnel. In Neurospora crassa (strain ATCC 24698 / 74-OR23-1A / CBS 708.71 / DSM 1257 / FGSC 987), this protein is Large ribosomal subunit protein uL15 (rpl-28).